We begin with the raw amino-acid sequence, 743 residues long: Phosphoribosylformylglycinamidine synthase subunit PurL (743 aa).

H50 is an active-site residue. The ATP site is built by Y53 and K92. A Mg(2+)-binding site is contributed by E94. Substrate is bound by residues 95–98 (SHNH) and R117. The Proton acceptor role is filled by H96. D118 lines the Mg(2+) pocket. Residue Q241 coordinates substrate. D269 contributes to the Mg(2+) binding site. 313-315 (ESQ) contributes to the substrate binding site. The ATP site is built by D495 and G532. Position 533 (N533) interacts with Mg(2+). S535 provides a ligand contact to substrate.

This sequence belongs to the FGAMS family. As to quaternary structure, monomer. Part of the FGAM synthase complex composed of 1 PurL, 1 PurQ and 2 PurS subunits.

Its subcellular location is the cytoplasm. The catalysed reaction is N(2)-formyl-N(1)-(5-phospho-beta-D-ribosyl)glycinamide + L-glutamine + ATP + H2O = 2-formamido-N(1)-(5-O-phospho-beta-D-ribosyl)acetamidine + L-glutamate + ADP + phosphate + H(+). It participates in purine metabolism; IMP biosynthesis via de novo pathway; 5-amino-1-(5-phospho-D-ribosyl)imidazole from N(2)-formyl-N(1)-(5-phospho-D-ribosyl)glycinamide: step 1/2. Functionally, part of the phosphoribosylformylglycinamidine synthase complex involved in the purines biosynthetic pathway. Catalyzes the ATP-dependent conversion of formylglycinamide ribonucleotide (FGAR) and glutamine to yield formylglycinamidine ribonucleotide (FGAM) and glutamate. The FGAM synthase complex is composed of three subunits. PurQ produces an ammonia molecule by converting glutamine to glutamate. PurL transfers the ammonia molecule to FGAR to form FGAM in an ATP-dependent manner. PurS interacts with PurQ and PurL and is thought to assist in the transfer of the ammonia molecule from PurQ to PurL. The sequence is that of Phosphoribosylformylglycinamidine synthase subunit PurL from Rhizobium etli (strain CIAT 652).